The primary structure comprises 403 residues: Tryptophan synthase beta chain (403 aa).

N6-(pyridoxal phosphate)lysine is present on Lys90.

The protein belongs to the TrpB family. In terms of assembly, tetramer of two alpha and two beta chains. It depends on pyridoxal 5'-phosphate as a cofactor.

The catalysed reaction is (1S,2R)-1-C-(indol-3-yl)glycerol 3-phosphate + L-serine = D-glyceraldehyde 3-phosphate + L-tryptophan + H2O. It participates in amino-acid biosynthesis; L-tryptophan biosynthesis; L-tryptophan from chorismate: step 5/5. The beta subunit is responsible for the synthesis of L-tryptophan from indole and L-serine. The polypeptide is Tryptophan synthase beta chain (Leifsonia xyli subsp. xyli (strain CTCB07)).